The primary structure comprises 735 residues: Photosystem I P700 chlorophyll a apoprotein A2 (735 aa).

Helical transmembrane passes span 46 to 69, 135 to 158, 175 to 199, 274 to 292, 331 to 354, 370 to 396, 418 to 440, and 518 to 536; these read IFAS…FHVA, LYTG…LHLQ, LNHH…HVAI, IAHH…GHMY, IHFQ…QHMY, AALY…IFFI, AIIS…PYVH, and FLVH…LILV. The [4Fe-4S] cluster site is built by Cys560 and Cys569. Helical transmembrane passes span 576-597 and 644-666; these read AFYL…YWHW and LSVW…MFLI. Residues His655, Met663, and Tyr671 each coordinate chlorophyll a. Trp672 is a phylloquinone binding site. Residues 708–728 form a helical membrane-spanning segment; that stretch reads LVGLAHFSVGYIFTYAAFLIA.

It belongs to the PsaA/PsaB family. The PsaA/B heterodimer binds the P700 chlorophyll special pair and subsequent electron acceptors. PSI consists of a core antenna complex that captures photons, and an electron transfer chain that converts photonic excitation into a charge separation. The eukaryotic PSI reaction center is composed of at least 11 subunits. P700 is a chlorophyll a/chlorophyll a' dimer, A0 is one or more chlorophyll a, A1 is one or both phylloquinones and FX is a shared 4Fe-4S iron-sulfur center. is required as a cofactor.

Its subcellular location is the plastid. It is found in the chloroplast thylakoid membrane. The catalysed reaction is reduced [plastocyanin] + hnu + oxidized [2Fe-2S]-[ferredoxin] = oxidized [plastocyanin] + reduced [2Fe-2S]-[ferredoxin]. PsaA and PsaB bind P700, the primary electron donor of photosystem I (PSI), as well as the electron acceptors A0, A1 and FX. PSI is a plastocyanin-ferredoxin oxidoreductase, converting photonic excitation into a charge separation, which transfers an electron from the donor P700 chlorophyll pair to the spectroscopically characterized acceptors A0, A1, FX, FA and FB in turn. Oxidized P700 is reduced on the lumenal side of the thylakoid membrane by plastocyanin. The chain is Photosystem I P700 chlorophyll a apoprotein A2 from Zea mays (Maize).